A 473-amino-acid polypeptide reads, in one-letter code: Anthocyanidin 5,3-O-glucosyltransferase (473 aa).

Belongs to the UDP-glycosyltransferase family.

It functions in the pathway pigment biosynthesis; anthocyanin biosynthesis. Its function is as follows. Sequentially catalyzes two glycosylation steps at the 5-OH and 3-OH positions of anthocyanidin. Unglycosylated anthocyanidin or anthocyanidin 5-O-glucoside, but not anthocyanidin 3-O-glucoside, can be used as glucosyl acceptor. This chain is Anthocyanidin 5,3-O-glucosyltransferase (RhGT1), found in Rosa hybrid cultivar.